Here is a 353-residue protein sequence, read N- to C-terminus: uncharacterized protein (353 aa).

Asp212, Asp223, His287, Glu316, and Glu330 together coordinate Mn(2+).

Belongs to the peptidase M24B family. Mn(2+) is required as a cofactor.

This is an uncharacterized protein from Bacillus subtilis (strain 168).